Reading from the N-terminus, the 275-residue chain is Urease accessory protein UreD (275 aa).

It belongs to the UreD family. In terms of assembly, ureD, UreF and UreG form a complex that acts as a GTP-hydrolysis-dependent molecular chaperone, activating the urease apoprotein by helping to assemble the nickel containing metallocenter of UreC. The UreE protein probably delivers the nickel.

It localises to the cytoplasm. In terms of biological role, required for maturation of urease via the functional incorporation of the urease nickel metallocenter. The protein is Urease accessory protein UreD of Cereibacter sphaeroides (strain ATCC 17029 / ATH 2.4.9) (Rhodobacter sphaeroides).